A 302-amino-acid polypeptide reads, in one-letter code: Cuticle collagen dpy-13 (302 aa).

3 triple-helical region regions span residues glycine 106 to alanine 135, glycine 154 to proline 210, and glycine 219 to proline 278. Positions glutamine 108–cysteine 284 are disordered. Pro residues predominate over residues threonine 144–proline 159. A compositionally biased stretch (low complexity) spans proline 188–lysine 197. Composition is skewed to pro residues over residues glutamine 247–aspartate 257 and glutamine 268–threonine 277.

The protein belongs to the cuticular collagen family. In terms of assembly, collagen polypeptide chains are complexed within the cuticle by disulfide bonds and other types of covalent cross-links.

In terms of biological role, nematode cuticles are composed largely of collagen-like proteins. The cuticle functions both as an exoskeleton and as a barrier to protect the worm from its environment. Mutations in dpy-13 affects the body shape. This chain is Cuticle collagen dpy-13 (dpy-13), found in Caenorhabditis elegans.